The primary structure comprises 478 residues: UDP-N-acetylmuramate--L-alanine ligase (478 aa).

G130–T136 is a binding site for ATP.

This sequence belongs to the MurCDEF family.

It localises to the cytoplasm. It carries out the reaction UDP-N-acetyl-alpha-D-muramate + L-alanine + ATP = UDP-N-acetyl-alpha-D-muramoyl-L-alanine + ADP + phosphate + H(+). The protein operates within cell wall biogenesis; peptidoglycan biosynthesis. Cell wall formation. In Microcystis aeruginosa (strain NIES-843 / IAM M-2473), this protein is UDP-N-acetylmuramate--L-alanine ligase.